The primary structure comprises 321 residues: MSDALLNAGRQTLMLELQEASRLPERLGDDFVRAANIIIHCEGKVIVSGIGKSGHIGKKIAATLASTGTPAFFVHPAEALHGDLGMIESRDVMLFISYSGGAKELDLIIPRLEDKSVALLAMTGKPHSPLGRAAKAVLDISVEREACPMHLAPTSSTVNTLMMGDALAMAVMQARGFNEEDFARSHPAGALGARLLNNVHHLMRQGDAIPQVMLATSVMDAMLELSRTGLGLVAVCDEQHVVKGVFTDGDLRRWLVGGGALTTPVSEAMTPNGITLQAQSRAIDAKELLMKRKITAAPVVDENGKLTGAINLQDFYQAGII.

The region spanning 34-177 is the SIS domain; that stretch reads AANIIIHCEG…AMAVMQARGF (144 aa). An ATP-binding site is contributed by 49 to 54; it reads GIGKSG. Substrate contacts are provided by residues 68–69, histidine 75, histidine 81, 107–116, and 141–143; these read GT, LIIPRLEDKS, and SVE. Histidine 75 is a Zn(2+) binding site. The 59-residue stretch at 203-261 folds into the CBS 1 domain; that stretch reads MRQGDAIPQVMLATSVMDAMLELSRTGLGLVAVCDEQHVVKGVFTDGDLRRWLVGGGAL. Glutamate 267 is a binding site for substrate. The 53-residue stretch at 269–321 folds into the CBS 2 domain; it reads MTPNGITLQAQSRAIDAKELLMKRKITAAPVVDENGKLTGAINLQDFYQAGII.

Belongs to the SIS family. GutQ/KpsF subfamily. In terms of assembly, homotetramer.

It catalyses the reaction D-arabinose 5-phosphate = D-ribulose 5-phosphate. Its function is as follows. Catalyzes the reversible aldol-ketol isomerization between D-ribulose 5-phosphate (Ru5P) and D-arabinose 5-phosphate (A5P). It is also able of sustaining the biosynthetic pathway of 3-deoxy-D-manno-octulosonate (KDO), a unique 8-carbon sugar component of lipopolysaccharides (LPSs). The polypeptide is Arabinose 5-phosphate isomerase GutQ (gutQ) (Salmonella typhi).